A 165-amino-acid polypeptide reads, in one-letter code: UPF0262 protein Sala_0765 (165 aa).

It belongs to the UPF0262 family.

This chain is UPF0262 protein Sala_0765, found in Sphingopyxis alaskensis (strain DSM 13593 / LMG 18877 / RB2256) (Sphingomonas alaskensis).